The sequence spans 443 residues: Phosphoglucosamine mutase (443 aa).

Residue Ser100 is the Phosphoserine intermediate of the active site. 4 residues coordinate Mg(2+): Ser100, Asp240, Asp242, and Asp244. Ser100 carries the post-translational modification Phosphoserine.

The protein belongs to the phosphohexose mutase family. It depends on Mg(2+) as a cofactor. In terms of processing, activated by phosphorylation.

The enzyme catalyses alpha-D-glucosamine 1-phosphate = D-glucosamine 6-phosphate. Functionally, catalyzes the conversion of glucosamine-6-phosphate to glucosamine-1-phosphate. The chain is Phosphoglucosamine mutase from Carboxydothermus hydrogenoformans (strain ATCC BAA-161 / DSM 6008 / Z-2901).